A 304-amino-acid chain; its full sequence is Flagellin (304 aa).

Belongs to the bacterial flagellin family. In terms of assembly, interacts with FliW in a 1:1 complex. Forms a 3-way complex of Hag, FliS and FliW, in which Flis and FliW do not directly interact.

It localises to the secreted. It is found in the bacterial flagellum. Its subcellular location is the cell wall. Functionally, flagellin is the subunit which polymerizes to form the filaments of bacterial flagella. Assembly into flagella requires FliW. Acts as a homeostatic autoinhibitory regulator to control its own cytoplasmic levels. Partner switching by flagellin between FliW and CsrA provides a flagellar assembly checkpoint to tightly control the timing of flagellin synthesis. Flagellin binds to assembly factor FliW, freeing translation regulator CsrA to repress translation of the flagellin mRNA. When the flagellar hook is assembled flagellin is secreted, depleting intracellular flagellin, which frees FliW to interact with CsrA. This derepresses flagellin translation and provides protein for flagellar assembly. Once the flagellar filament is completed cytoplasmic flagellin levels rise and CsrA translation repression of flagellin reinitiates. This chain is Flagellin, found in Bacillus subtilis (strain 168).